A 222-amino-acid chain; its full sequence is Putative O-methyltransferase MAP_2558 (222 aa).

Residues Val-49, Glu-71, 73-74 (GT), Ser-79, Asp-97, and Ile-98 contribute to the S-adenosyl-L-methionine site. Asp-145 contributes to the substrate binding site. An S-adenosyl-L-methionine-binding site is contributed by Asp-147.

It belongs to the class I-like SAM-binding methyltransferase superfamily. Cation-dependent O-methyltransferase family.

This chain is Putative O-methyltransferase MAP_2558, found in Mycolicibacterium paratuberculosis (strain ATCC BAA-968 / K-10) (Mycobacterium paratuberculosis).